The sequence spans 439 residues: Oocyte zinc finger protein XlCOF28 (439 aa).

9 consecutive C2H2-type zinc fingers follow at residues 6 to 28 (YECT…QRTH), 34 to 56 (FKCT…KKCH), 62 to 84 (YMCT…IRTH), 90 to 112 (FTCT…LRIH), 118 to 140 (HKCN…QRTH), 146 to 168 (FQCT…LRIH), 174 to 196 (YKCS…QRTH), 202 to 224 (FQCS…ERTH), and 230 to 252 (YKCS…QKTH). Disordered regions lie at residues 246–275 (KLHQ…APKT) and 285–304 (AGLE…ESPE). 4 consecutive C2H2-type zinc fingers follow at residues 333 to 355 (HKCT…QRTH), 361 to 383 (FKCS…RKIH), 389 to 411 (YTCA…RRTH), and 417 to 439 (YICA…QRIH).

It belongs to the krueppel C2H2-type zinc-finger protein family.

It is found in the nucleus. May be involved in transcriptional regulation. The protein is Oocyte zinc finger protein XlCOF28 of Xenopus laevis (African clawed frog).